We begin with the raw amino-acid sequence, 582 residues long: MSSSSSSSLPTSSASTTTSSITSRPSASHHLESILSSSSSSPSILSSLTTQSTSSIPTSSSSSSQRQSTSNADRPVSPKPMPTPTTLSEWQLLAVLSKANLVQYYDVFIAQGGDDINQIMACEEREFLEIMNLVGMLPKPLHVRRMQRALAEYSQDQTAFNLAALQQIGPPPPLNYTPAGTDPMALLLPGIAAATSPKFPSLRFLSQLSSVAEKVSTPSEAADTSSSSPSLNLNTTSSNSVPLAFKFSTPLLESLASDQQSSSTSSVRSVLPSTSSNTSHPELPAGILPATTTNVSAAVPPPSSRATANVFSGNSIGLNFSGAASVTRHLVVPPSSTSIQQPSTSFGRSSSITGQEKEGSSSPFLGVGYSQPYGNDFVSLGDFDPNNPSLTENPTLSTAQISRLAECALAASKNLPPLPPRLVQNKKRVSKEVIELLKCSPATPSMIHAFRKYSAIYGRFDTKRKPHKVLTLHETTVNEAAAQLCLLVPSLLTRRDELFPLARQIVKDAGYNYAKSRKRPCDPADLHSPISSPGNSPPPQESEFDEQPSSSSGAFKEEERPPIPPEAWAAIIEKMKGELPES.

The segment covering 1–70 (MSSSSSSSLP…SSSSQRQSTS (70 aa)) has biased composition (low complexity). Disordered regions lie at residues 1–84 (MSSS…MPTP), 257–287 (SDQQ…PAGI), 333–365 (PPSS…SPFL), and 516–582 (SRKR…LPES). Residues 83 to 161 (TPTTLSEWQL…EYSQDQTAFN (79 aa)) are NCD1. Composition is skewed to low complexity over residues 257–276 (SDQQ…STSS) and 333–345 (PPSS…PSTS). Residues 396–519 (LSTAQISRLA…GYNYAKSRKR (124 aa)) form an NCD2 region. The span at 573 to 582 (EKMKGELPES) shows a compositional bias: basic and acidic residues.

The protein belongs to the NAB family. As to quaternary structure, interacts with transcription factor lin-29 (via C-terminus).

It is found in the nucleus. Functionally, transcriptional cofactor. Heterochronic protein, involved in timing of a subset of differentiation events during the larval-to-adult transition. Promotes hypodermal terminal differentiation, together with transcription factor lin-29, perhaps as part of a transcriptional complex. Involved in regulating molting by repressing the expression of nuclear hormone receptors nhr-23 and nhr-25 in the adult hypoderm, probably acting in concert with lin-29. In Caenorhabditis elegans, this protein is NAB transcription cofactor mab-10.